Reading from the N-terminus, the 401-residue chain is Mannonate dehydratase (401 aa).

It belongs to the mannonate dehydratase family. It depends on Fe(2+) as a cofactor. Requires Mn(2+) as cofactor.

The enzyme catalyses D-mannonate = 2-dehydro-3-deoxy-D-gluconate + H2O. Its pathway is carbohydrate metabolism; pentose and glucuronate interconversion. In terms of biological role, catalyzes the dehydration of D-mannonate. The protein is Mannonate dehydratase of Brucella canis (strain ATCC 23365 / NCTC 10854 / RM-666).